The chain runs to 448 residues: Protein odr-4 homolog (448 aa).

The next 2 helical transmembrane spans lie at 76 to 96 (ASQL…FLMT) and 428 to 448 (GLLI…YYII).

The protein belongs to the ODR-4 family.

It is found in the membrane. In terms of biological role, may play a role in the trafficking of a subset of G-protein coupled receptors. This Xenopus tropicalis (Western clawed frog) protein is Protein odr-4 homolog (odr4).